The sequence spans 164 residues: Protein-export protein SecB (164 aa).

It belongs to the SecB family. In terms of assembly, homotetramer, a dimer of dimers. One homotetramer interacts with 1 SecA dimer.

It is found in the cytoplasm. Its function is as follows. One of the proteins required for the normal export of preproteins out of the cell cytoplasm. It is a molecular chaperone that binds to a subset of precursor proteins, maintaining them in a translocation-competent state. It also specifically binds to its receptor SecA. The polypeptide is Protein-export protein SecB (Nitrosococcus oceani (strain ATCC 19707 / BCRC 17464 / JCM 30415 / NCIMB 11848 / C-107)).